Consider the following 295-residue polypeptide: Shikimate dehydrogenase (NADP(+)) (295 aa).

Shikimate is bound by residues 21-23 (SLS) and threonine 68. Residue lysine 72 is the Proton acceptor of the active site. The shikimate site is built by asparagine 93 and aspartate 108. NADP(+)-binding positions include 132–136 (GAGGA), 156–161 (NRTPER), and leucine 228. Tyrosine 230 lines the shikimate pocket. An NADP(+)-binding site is contributed by glycine 251.

It belongs to the shikimate dehydrogenase family. Homodimer.

The catalysed reaction is shikimate + NADP(+) = 3-dehydroshikimate + NADPH + H(+). The protein operates within metabolic intermediate biosynthesis; chorismate biosynthesis; chorismate from D-erythrose 4-phosphate and phosphoenolpyruvate: step 4/7. In terms of biological role, involved in the biosynthesis of the chorismate, which leads to the biosynthesis of aromatic amino acids. Catalyzes the reversible NADPH linked reduction of 3-dehydroshikimate (DHSA) to yield shikimate (SA). The sequence is that of Shikimate dehydrogenase (NADP(+)) from Moorella thermoacetica (strain ATCC 39073 / JCM 9320).